Here is a 555-residue protein sequence, read N- to C-terminus: Coiled-coil domain-containing protein 102A (555 aa).

Disordered regions lie at residues methionine 1–aspartate 68, leucine 136–glutamate 202, and proline 214–alanine 254. A phosphoserine mark is found at serine 12, serine 26, and serine 28. The segment covering serine 37–proline 61 has biased composition (pro residues). Residues arginine 72–arginine 161 are a coiled coil. 2 stretches are compositionally biased toward basic and acidic residues: residues leucine 136–arginine 159 and glycine 166–glutamate 183. Residues arginine 224–glycine 236 show a composition bias toward low complexity. 2 coiled-coil regions span residues glutamine 268 to threonine 401 and lysine 432 to proline 522. A disordered region spans residues glutamate 478–alanine 555. The segment covering glutamate 536–alanine 555 has biased composition (acidic residues). Position 542 is a phosphoserine (serine 542).

The chain is Coiled-coil domain-containing protein 102A (CCDC102A) from Bos taurus (Bovine).